The primary structure comprises 516 residues: GMP synthase [glutamine-hydrolyzing] (516 aa).

Residues 6–198 (KVIIVDYGSQ…LFKIAGIKAD (193 aa)) form the Glutamine amidotransferase type-1 domain. Cys83 (nucleophile) is an active-site residue. Residues His172 and Glu174 contribute to the active site. The 193-residue stretch at 199 to 391 (WSMSSFCERV…LGLPDFIVWR (193 aa)) folds into the GMPS ATP-PPase domain. ATP is bound at residue 227-233 (SGGIDST).

As to quaternary structure, homodimer.

It carries out the reaction XMP + L-glutamine + ATP + H2O = GMP + L-glutamate + AMP + diphosphate + 2 H(+). It participates in purine metabolism; GMP biosynthesis; GMP from XMP (L-Gln route): step 1/1. Its function is as follows. Catalyzes the synthesis of GMP from XMP. This chain is GMP synthase [glutamine-hydrolyzing], found in Oleidesulfovibrio alaskensis (strain ATCC BAA-1058 / DSM 17464 / G20) (Desulfovibrio alaskensis).